A 330-amino-acid chain; its full sequence is GMP reductase (330 aa).

Cys-180 acts as the Thioimidate intermediate in catalysis. NADP(+) is bound at residue 209–232; that stretch reads LIADGGIRHNGDIAKSVRFGASMV.

It belongs to the IMPDH/GMPR family. GuaC type 2 subfamily.

It carries out the reaction IMP + NH4(+) + NADP(+) = GMP + NADPH + 2 H(+). Its function is as follows. Catalyzes the irreversible NADPH-dependent deamination of GMP to IMP. It functions in the conversion of nucleobase, nucleoside and nucleotide derivatives of G to A nucleotides, and in maintaining the intracellular balance of A and G nucleotides. In Lactobacillus delbrueckii subsp. bulgaricus (strain ATCC BAA-365 / Lb-18), this protein is GMP reductase.